The following is a 238-amino-acid chain: MEVNEVDAREIIEMIAKSKKKTPIVAYIKGKLDGIDFSKFKFFGNDQFGVLFGEYEDFRELLEKYGEKIEDYHLEVKARNSALPLADITKYRARIEPGAIIRDMVEIGEGAVIMMGAVINVGAVIGEGTMIDMNAVVGGRAIIGKKCHIGAGAVIAGVIEPPSAKPVVIEDEVVVGANAVILEGVTVGKGSVVAAGAVVTKDVPPYTVVAGVPARVIKQIDEKTKEKTRIVDELRNLE.

The protein belongs to the transferase hexapeptide repeat family. DapH subfamily.

It catalyses the reaction (S)-2,3,4,5-tetrahydrodipicolinate + acetyl-CoA + H2O = L-2-acetamido-6-oxoheptanedioate + CoA. It functions in the pathway amino-acid biosynthesis; L-lysine biosynthesis via DAP pathway; LL-2,6-diaminopimelate from (S)-tetrahydrodipicolinate (acetylase route): step 1/3. Catalyzes the transfer of an acetyl group from acetyl-CoA to tetrahydrodipicolinate. The sequence is that of 2,3,4,5-tetrahydropyridine-2,6-dicarboxylate N-acetyltransferase from Thermotoga neapolitana (strain ATCC 49049 / DSM 4359 / NBRC 107923 / NS-E).